Consider the following 621-residue polypeptide: F-box/LRR-repeat protein 4 (621 aa).

Arginine 28 is modified (asymmetric dimethylarginine). An F-box domain is found at 277–332 (NGYFDKLPYELIQLILNHLSLPDLCRLAQTCRLLHQHCCDPLQYIHLNLQPYWARL). 9 LRR repeats span residues 376-397 (ELVR…EVIS), 402-421 (NLQD…AFGH), 427-448 (SLKR…SILN), 452-474 (ELQH…ASMI), 480-501 (NLRT…AELA), 504-524 (CVLL…STGC), 532-558 (LPNL…ASNC), 559-583 (TRLQ…LLES), and 584-609 (CKDL…LNAS).

Part of a SCF (SKP1-CUL1-F-box) protein ligase complex. Interacts with FAF2 and VCP. Interacts with PPTC7; this interaction promotes destruction of BNIP3 and NIX and mitophagy suppression.

It is found in the cytoplasm. The protein resides in the nucleus. It localises to the mitochondrion outer membrane. Functionally, substrate-recognition component of the mitochondria-localized SCF-FBXL4 ubiquitin E3 ligase complex that plays a role in the restriction of mitophagy by controlling the degradation of BNIP3 and NIX mitophagy receptors. Also rescues mitochondrial injury through reverting hyperactivation of DRP1-mediated mitochondrial fission. The protein is F-box/LRR-repeat protein 4 (Fbxl4) of Mus musculus (Mouse).